Here is a 95-residue protein sequence, read N- to C-terminus: Large ribosomal subunit protein bL25 (95 aa).

This sequence belongs to the bacterial ribosomal protein bL25 family. As to quaternary structure, part of the 50S ribosomal subunit; part of the 5S rRNA/L5/L18/L25 subcomplex. Contacts the 5S rRNA. Binds to the 5S rRNA independently of L5 and L18.

In terms of biological role, this is one of the proteins that binds to the 5S RNA in the ribosome where it forms part of the central protuberance. The sequence is that of Large ribosomal subunit protein bL25 from Shewanella loihica (strain ATCC BAA-1088 / PV-4).